We begin with the raw amino-acid sequence, 22 residues long: Protein YncP (22 aa).

This is Protein YncP from Escherichia coli (strain K12).